Reading from the N-terminus, the 257-residue chain is Thioredoxin-dependent peroxide reductase, mitochondrial (257 aa).

Residues 1–62 (MAAAAGRLLW…SAFSTSSSFH (62 aa)) constitute a mitochondrion transit peptide. Positions 64 to 222 (PAVTQHAPYF…TLRLVKAFQF (159 aa)) constitute a Thioredoxin domain. Lys84 is modified (N6-succinyllysine). Residue Lys92 is modified to N6-acetyllysine; alternate. Position 92 is an N6-succinyllysine; alternate (Lys92). Cys109 (cysteine sulfenic acid (-SOH) intermediate) is an active-site residue. Thr147 is modified (phosphothreonine).

This sequence belongs to the peroxiredoxin family. AhpC/Prx1 subfamily. In terms of assembly, homodimer; disulfide-linked, upon oxidation. 6 homodimers assemble to form a ring-like dodecamer. Interacts with NEK6. Interacts with LRRK2. Interacts with MAP3K13. Interacts with RPS6KC1 (via PX domain). Phosphorylated by LRRK2; phosphorylation reduces perodixase activity. In terms of processing, the enzyme can be inactivated by further oxidation of the cysteine sulfenic acid (C(P)-SOH) to sulphinic acid (C(P)-SO2H) and sulphonic acid (C(P)-SO3H) instead of its condensation to a disulfide bond. Post-translationally, S-palmitoylated. In terms of tissue distribution, housekeeping-type gene preferentially expressed in murine erythroleukemia (MEL) cells.

It localises to the mitochondrion. The protein localises to the cytoplasm. It is found in the early endosome. The enzyme catalyses a hydroperoxide + [thioredoxin]-dithiol = an alcohol + [thioredoxin]-disulfide + H2O. In terms of biological role, thiol-specific peroxidase that catalyzes the reduction of hydrogen peroxide and organic hydroperoxides to water and alcohols, respectively. Plays a role in cell protection against oxidative stress by detoxifying peroxides. Acts synergistically with MAP3K13 to regulate the activation of NF-kappa-B in the cytosol. Required for the maintenance of physical strength. This Mus musculus (Mouse) protein is Thioredoxin-dependent peroxide reductase, mitochondrial (Prdx3).